Reading from the N-terminus, the 213-residue chain is Pyrrolidone-carboxylate peptidase (213 aa).

Residues Glu-81, Cys-144, and His-166 contribute to the active site.

The protein belongs to the peptidase C15 family. In terms of assembly, homodimer.

The protein resides in the cytoplasm. The enzyme catalyses Release of an N-terminal pyroglutamyl group from a polypeptide, the second amino acid generally not being Pro.. Functionally, removes 5-oxoproline from various penultimate amino acid residues except L-proline. The protein is Pyrrolidone-carboxylate peptidase (pcp) of Pseudomonas fluorescens.